The following is an 874-amino-acid chain: Alanine--tRNA ligase (874 aa).

Residues His-562, His-566, Cys-665, and His-669 each contribute to the Zn(2+) site.

This sequence belongs to the class-II aminoacyl-tRNA synthetase family. Zn(2+) serves as cofactor.

It localises to the cytoplasm. The enzyme catalyses tRNA(Ala) + L-alanine + ATP = L-alanyl-tRNA(Ala) + AMP + diphosphate. Its function is as follows. Catalyzes the attachment of alanine to tRNA(Ala) in a two-step reaction: alanine is first activated by ATP to form Ala-AMP and then transferred to the acceptor end of tRNA(Ala). Also edits incorrectly charged Ser-tRNA(Ala) and Gly-tRNA(Ala) via its editing domain. The protein is Alanine--tRNA ligase of Pseudomonas paraeruginosa (strain DSM 24068 / PA7) (Pseudomonas aeruginosa (strain PA7)).